The chain runs to 627 residues: Membrane protein insertase YidC (627 aa).

Residues 8–28 (LFLALILSMGIWMGVNYFFFP) form a helical membrane-spanning segment. Polar residues predominate over residues 33-57 (KKNTETKQTQSDKTSENTKQQITSG). Residues 33–68 (KKNTETKQTQSDKTSENTKQQITSGKTKESNSADPV) form a disordered region. Over residues 58–68 (KTKESNSADPV) the composition is skewed to basic and acidic residues. Transmembrane regions (helical) follow at residues 417–437 (FTIP…KLVF), 488–508 (VGGC…YTAF), 536–556 (AIPY…LMVG), and 575–595 (MLMY…PSGV).

This sequence belongs to the OXA1/ALB3/YidC family. Type 1 subfamily. In terms of assembly, interacts with the Sec translocase complex via SecD. Specifically interacts with transmembrane segments of nascent integral membrane proteins during membrane integration.

Its subcellular location is the cell inner membrane. In terms of biological role, required for the insertion and/or proper folding and/or complex formation of integral membrane proteins into the membrane. Involved in integration of membrane proteins that insert both dependently and independently of the Sec translocase complex, as well as at least some lipoproteins. Aids folding of multispanning membrane proteins. This Leptospira interrogans serogroup Icterohaemorrhagiae serovar Lai (strain 56601) protein is Membrane protein insertase YidC.